Here is a 140-residue protein sequence, read N- to C-terminus: FLYWCH family member 2 (140 aa).

Disordered regions lie at residues 1–39 and 84–140; these read MPLPEPSEQEGESVKASQEPSPKPGTEVIPAAPRKPRKF and HPEA…GKSL. Serine 21 is modified (phosphoserine). A compositionally biased stretch (basic and acidic residues) spans 98–114; sequence PEQKRSRQDPGTDRTED. Low complexity predominate over residues 118–127; the sequence is AAGPPEAAGE.

This Homo sapiens (Human) protein is FLYWCH family member 2 (FLYWCH2).